We begin with the raw amino-acid sequence, 177 residues long: MSRVAKAPVVLPAGVEVKLNGQEITIKGGKGELTRVLNNAVVVSQEDNSIVFGPREGVANAWAQAGTARALVNNMVVGVNEGFTKKLTLKGVGYRATMKGNAVGLTLGFSHPVEHALPEGIKAECPTQTEIIITGCDKQVVGQVAADIRSYRKPEPYKGKGVRYADEIVRTKEAKKK.

Belongs to the universal ribosomal protein uL6 family. As to quaternary structure, part of the 50S ribosomal subunit.

In terms of biological role, this protein binds to the 23S rRNA, and is important in its secondary structure. It is located near the subunit interface in the base of the L7/L12 stalk, and near the tRNA binding site of the peptidyltransferase center. This is Large ribosomal subunit protein uL6 from Aliivibrio salmonicida (strain LFI1238) (Vibrio salmonicida (strain LFI1238)).